We begin with the raw amino-acid sequence, 811 residues long: Glycerol-3-phosphate acyltransferase (811 aa).

The short motif at 308–313 is the HXXXXD motif element; sequence CHRSHM.

This sequence belongs to the GPAT/DAPAT family.

The protein localises to the cell inner membrane. The enzyme catalyses sn-glycerol 3-phosphate + an acyl-CoA = a 1-acyl-sn-glycero-3-phosphate + CoA. It functions in the pathway phospholipid metabolism; CDP-diacylglycerol biosynthesis; CDP-diacylglycerol from sn-glycerol 3-phosphate: step 1/3. The chain is Glycerol-3-phosphate acyltransferase from Pseudoalteromonas atlantica (strain T6c / ATCC BAA-1087).